The chain runs to 251 residues: uncharacterized protein (251 aa).

One can recognise an HTH deoR-type domain in the interval 3–58 (TPERHQLIIDQIEKHDVVKIQELINLTNASESTIRRDLSTLEERGFLKRVHGGAAK). Residues 20-39 (VKIQELINLTNASESTIRRD) constitute a DNA-binding region (H-T-H motif).

This is an uncharacterized protein from Bacillus subtilis (strain 168).